The chain runs to 631 residues: Phosphomethylpyrimidine synthase (631 aa).

Residues asparagine 239, methionine 268, tyrosine 297, histidine 333, 353–355 (SRG), 394–397 (DGLR), and glutamate 433 each bind substrate. Residue histidine 437 participates in Zn(2+) binding. Residue tyrosine 460 coordinates substrate. Residue histidine 501 participates in Zn(2+) binding. 3 residues coordinate [4Fe-4S] cluster: cysteine 581, cysteine 584, and cysteine 589.

This sequence belongs to the ThiC family. In terms of assembly, homodimer. [4Fe-4S] cluster serves as cofactor.

It carries out the reaction 5-amino-1-(5-phospho-beta-D-ribosyl)imidazole + S-adenosyl-L-methionine = 4-amino-2-methyl-5-(phosphooxymethyl)pyrimidine + CO + 5'-deoxyadenosine + formate + L-methionine + 3 H(+). It functions in the pathway cofactor biosynthesis; thiamine diphosphate biosynthesis. Functionally, catalyzes the synthesis of the hydroxymethylpyrimidine phosphate (HMP-P) moiety of thiamine from aminoimidazole ribotide (AIR) in a radical S-adenosyl-L-methionine (SAM)-dependent reaction. The chain is Phosphomethylpyrimidine synthase from Escherichia coli O8 (strain IAI1).